A 300-amino-acid chain; its full sequence is Ribosomal RNA small subunit methyltransferase H (300 aa).

Residues 46–48 (GGH), aspartate 65, phenylalanine 92, aspartate 107, and glutamine 114 each bind S-adenosyl-L-methionine.

The protein belongs to the methyltransferase superfamily. RsmH family.

It localises to the cytoplasm. It carries out the reaction cytidine(1402) in 16S rRNA + S-adenosyl-L-methionine = N(4)-methylcytidine(1402) in 16S rRNA + S-adenosyl-L-homocysteine + H(+). Specifically methylates the N4 position of cytidine in position 1402 (C1402) of 16S rRNA. In Prochlorococcus marinus subsp. pastoris (strain CCMP1986 / NIES-2087 / MED4), this protein is Ribosomal RNA small subunit methyltransferase H.